A 457-amino-acid chain; its full sequence is Ribulose bisphosphate carboxylase large chain (457 aa).

Positions 1-2 (MS) are excised as a propeptide. P3 is modified (N-acetylproline). An N6,N6,N6-trimethyllysine modification is found at K14. 2 residues coordinate substrate: N123 and T173. The Proton acceptor role is filled by K175. Position 177 (K177) interacts with substrate. Positions 201, 203, and 204 each coordinate Mg(2+). K201 is modified (N6-carboxylysine). The Proton acceptor role is filled by H294. Residues R295, H327, and S379 each coordinate substrate.

This sequence belongs to the RuBisCO large chain family. Type I subfamily. Heterohexadecamer of 8 large chains and 8 small chains; disulfide-linked. The disulfide link is formed within the large subunit homodimers. It depends on Mg(2+) as a cofactor. The disulfide bond which can form in the large chain dimeric partners within the hexadecamer appears to be associated with oxidative stress and protein turnover.

Its subcellular location is the plastid. The protein localises to the chloroplast. The enzyme catalyses 2 (2R)-3-phosphoglycerate + 2 H(+) = D-ribulose 1,5-bisphosphate + CO2 + H2O. It catalyses the reaction D-ribulose 1,5-bisphosphate + O2 = 2-phosphoglycolate + (2R)-3-phosphoglycerate + 2 H(+). Its function is as follows. RuBisCO catalyzes two reactions: the carboxylation of D-ribulose 1,5-bisphosphate, the primary event in carbon dioxide fixation, as well as the oxidative fragmentation of the pentose substrate in the photorespiration process. Both reactions occur simultaneously and in competition at the same active site. The protein is Ribulose bisphosphate carboxylase large chain of Phelline comosa.